We begin with the raw amino-acid sequence, 246 residues long: Enolase-phosphatase E1 (246 aa).

Positions 11 and 13 each coordinate Mg(2+). Substrate contacts are provided by residues 140-141 (SS) and Lys174. A Mg(2+)-binding site is contributed by Asp199.

The protein belongs to the HAD-like hydrolase superfamily. MasA/MtnC family. In terms of assembly, monomer. Requires Mg(2+) as cofactor.

The protein localises to the cytoplasm. The protein resides in the nucleus. The catalysed reaction is 5-methylsulfanyl-2,3-dioxopentyl phosphate + H2O = 1,2-dihydroxy-5-(methylsulfanyl)pent-1-en-3-one + phosphate. The protein operates within amino-acid biosynthesis; L-methionine biosynthesis via salvage pathway; L-methionine from S-methyl-5-thio-alpha-D-ribose 1-phosphate: step 3/6. It functions in the pathway amino-acid biosynthesis; L-methionine biosynthesis via salvage pathway; L-methionine from S-methyl-5-thio-alpha-D-ribose 1-phosphate: step 4/6. Bifunctional enzyme that catalyzes the enolization of 2,3-diketo-5-methylthiopentyl-1-phosphate (DK-MTP-1-P) into the intermediate 2-hydroxy-3-keto-5-methylthiopentenyl-1-phosphate (HK-MTPenyl-1-P), which is then dephosphorylated to form the acireductone 1,2-dihydroxy-3-keto-5-methylthiopentene (DHK-MTPene). This is Enolase-phosphatase E1 from Acyrthosiphon pisum (Pea aphid).